The primary structure comprises 161 residues: Alpha-crystallin A chain (161 aa).

Methionine 1 bears the N-acetylmethionine mark. Residues 1-53 (MDVTIQHPWFKRALGPFYHNRLFDQFFGEGLFEYDLLPFQSLFRTVLDSGISE) are required for complex formation with BFSP1 and BFSP2. 2 positions are modified to deamidated glutamine; partial: glutamine 6 and glutamine 40. Residues 41–150 (SLFRTVLDSG…SHSERAIPVS (110 aa)) form the sHSP domain. The residue at position 87 (lysine 87) is an N6-acetyllysine. Histidine 88 serves as a coordination point for Zn(2+). At asparagine 89 the chain carries Deamidated asparagine; partial. Positions 90 and 95 each coordinate Zn(2+). Position 110 is a phosphoserine (serine 110). Asparagine 111 is modified (deamidated asparagine; partial). An intrachain disulfide couples cysteine 119 to cysteine 130. Glutamine 135 carries the post-translational modification Deamidated glutamine; partial. A disordered region spans residues 135 to 161 (QSGMDASHSERAIPVSREEKASSAPNS). Positions 141–155 (SHSERAIPVSREEKA) are enriched in basic and acidic residues. Residue histidine 142 participates in Zn(2+) binding. Serine 150 is a glycosylation site (O-linked (GlcNAc) serine).

Belongs to the small heat shock protein (HSP20) family. As to quaternary structure, heteromer composed of three CRYAA and one CRYAB subunits. Inter-subunit bridging via zinc ions enhances stability, which is crucial as there is no protein turn over in the lens. Can also form homodimers and homotetramers (dimers of dimers) which serve as the building blocks of homooligomers. Within homooligomers, the zinc-binding motif is created from residues of 3 different molecules. His-88 and Glu-90 from one molecule are ligands of the zinc ion, and His-95 and His-142 residues from additional molecules complete the site with tetrahedral coordination geometry. Part of a complex required for lens intermediate filament formation composed of BFSP1, BFSP2 and CRYAA. Post-translationally, undergoes age-dependent proteolytical cleavage at the C-terminus.

Its subcellular location is the cytoplasm. The protein localises to the nucleus. Functionally, contributes to the transparency and refractive index of the lens. In its oxidized form (absence of intramolecular disulfide bond), acts as a chaperone, preventing aggregation of various proteins under a wide range of stress conditions. Required for the correct formation of lens intermediate filaments as part of a complex composed of BFSP1, BFSP2 and CRYAA. This chain is Alpha-crystallin A chain (CRYAA), found in Trichechus inunguis (Amazon manatee).